The chain runs to 964 residues: Vitamin B12-dependent ribonucleotide reductase (964 aa).

The disordered stretch occupies residues 1 to 21 (MTETASGPARGSRAKGTKAKG). The span at 12 to 21 (SRAKGTKAKG) shows a compositional bias: basic residues. Residues S142, 158–159 (AC), G187, 363–367 (NPCSE), and 553–557 (PTGTI) contribute to the substrate site. An intrachain disulfide couples C159 to C376. N363 (proton acceptor) is an active-site residue. The Cysteine radical intermediate role is filled by C365. Residue E367 is the Proton acceptor of the active site.

It belongs to the ribonucleoside diphosphate reductase class-2 family. Adenosylcob(III)alamin is required as a cofactor.

It carries out the reaction a 2'-deoxyribonucleoside 5'-diphosphate + [thioredoxin]-disulfide + H2O = a ribonucleoside 5'-diphosphate + [thioredoxin]-dithiol. In terms of biological role, catalyzes the reduction of ribonucleotides to deoxyribonucleotides. May function to provide a pool of deoxyribonucleotide precursors for DNA repair during oxygen limitation and/or for immediate growth after restoration of oxygen. The chain is Vitamin B12-dependent ribonucleotide reductase (nrdJ) from Streptomyces avermitilis (strain ATCC 31267 / DSM 46492 / JCM 5070 / NBRC 14893 / NCIMB 12804 / NRRL 8165 / MA-4680).